A 489-amino-acid chain; its full sequence is uncharacterized protein (489 aa).

The next 12 helical transmembrane spans lie at 14 to 34 (LLFV…ISLF), 36 to 56 (LGPF…IVTL), 100 to 120 (IIGP…FSGI), 127 to 147 (LVNT…LAFI), 158 to 178 (LIAL…IVAI), 203 to 223 (EISF…YAGV), 241 to 261 (ILIV…IILN), 286 to 306 (AAGL…NVST), 344 to 364 (IWFT…IPLV), 380 to 400 (VGSA…FKFI), 419 to 439 (LFCL…FPVI), and 449 to 469 (HTLT…LFLL).

This sequence to M.genitalium MG226.

It localises to the cell membrane. This is an uncharacterized protein from Mycoplasma genitalium (strain ATCC 33530 / DSM 19775 / NCTC 10195 / G37) (Mycoplasmoides genitalium).